The chain runs to 188 residues: Putative lipoprotein LprB (188 aa).

The signal sequence occupies residues Met1 to Gly27. Residue Cys28 is the site of N-palmitoyl cysteine attachment. The S-diacylglycerol cysteine moiety is linked to residue Cys28.

It localises to the cell membrane. This is Putative lipoprotein LprB (lprB) from Mycobacterium leprae (strain TN).